Here is a 438-residue protein sequence, read N- to C-terminus: GTPase Der (438 aa).

EngA-type G domains are found at residues 2–164 (HKVA…PEDD) and 173–343 (IRIS…EKWQ). GTP is bound by residues 8-15 (GRPNVGKS), 55-59 (DTGGL), 116-119 (NKID), 179-186 (GRPNVGKS), 226-230 (DTAGI), and 288-291 (NKWD). A KH-like domain is found at 344-428 (SRIGTSELNR…PVRLKWKEKG (85 aa)).

The protein belongs to the TRAFAC class TrmE-Era-EngA-EngB-Septin-like GTPase superfamily. EngA (Der) GTPase family. As to quaternary structure, associates with the 50S ribosomal subunit.

GTPase that plays an essential role in the late steps of ribosome biogenesis. The polypeptide is GTPase Der (Deinococcus radiodurans (strain ATCC 13939 / DSM 20539 / JCM 16871 / CCUG 27074 / LMG 4051 / NBRC 15346 / NCIMB 9279 / VKM B-1422 / R1)).